The chain runs to 43 residues: Protein PsbN (43 aa).

The helical transmembrane segment at 7–27 (VAIFISGLLVSFTGYALYTAF) threads the bilayer.

The protein belongs to the PsbN family.

Its subcellular location is the plastid. It localises to the chloroplast thylakoid membrane. In terms of biological role, may play a role in photosystem I and II biogenesis. The chain is Protein PsbN from Daucus carota (Wild carrot).